The chain runs to 147 residues: Hemoglobin subunit beta (147 aa).

Val2 carries the N-acetylvaline modification. Positions 3 to 147 (HLTGEEKGIV…VATALAHKYH (145 aa)) constitute a Globin domain. Thr13 carries the phosphothreonine modification. A Phosphoserine modification is found at Ser45. Lys60 carries the N6-acetyllysine modification. Position 64 (His64) interacts with heme b. Lys83 is modified (N6-acetyllysine). Position 93 (His93) interacts with heme b. Residue Cys94 is modified to S-nitrosocysteine. The residue at position 145 (Lys145) is an N6-acetyllysine.

This sequence belongs to the globin family. Heterotetramer of two alpha chains and two beta chains. As to expression, red blood cells.

In terms of biological role, involved in oxygen transport from the lung to the various peripheral tissues. The polypeptide is Hemoglobin subunit beta (HBB) (Rhinolophus ferrumequinum (Greater horseshoe bat)).